The sequence spans 197 residues: Recombination protein RecR (197 aa).

The C4-type zinc-finger motif lies at 57 to 72; sequence CSVCFGITEEDPCRLC. Positions 79-174 constitute a Toprim domain; sequence TSLCVVEEPQ…RVTRLAHGIP (96 aa).

It belongs to the RecR family.

May play a role in DNA repair. It seems to be involved in an RecBC-independent recombinational process of DNA repair. It may act with RecF and RecO. The sequence is that of Recombination protein RecR from Geobacter metallireducens (strain ATCC 53774 / DSM 7210 / GS-15).